The primary structure comprises 313 residues: Probable WRKY transcription factor 41 (313 aa).

The segment at residues 135 to 203 (GLEGPHDDIF…YRGTHTCSQG (69 aa)) is a DNA-binding region (WRKY).

It belongs to the WRKY group III family.

Its subcellular location is the nucleus. Its function is as follows. Transcription factor. Interacts specifically with the W box (5'-(T)TGAC[CT]-3'), a frequently occurring elicitor-responsive cis-acting element. The protein is Probable WRKY transcription factor 41 (WRKY41) of Arabidopsis thaliana (Mouse-ear cress).